The primary structure comprises 420 residues: FAD-dependent monooxygenase ntnJ (420 aa).

The chain crosses the membrane as a helical span at residues 12-31 (FRVIVVGAGIGGLSAAVALA). Glutamate 41 and alanine 54 together coordinate FAD. N-linked (GlcNAc...) asparagine glycosylation is present at asparagine 124. Residue arginine 187 is part of the active site. Asparagine 264 carries an N-linked (GlcNAc...) asparagine glycan. The FAD site is built by aspartate 302 and valine 315.

It belongs to the paxM FAD-dependent monooxygenase family. FAD serves as cofactor.

The protein resides in the membrane. The protein operates within secondary metabolite biosynthesis; terpenoid biosynthesis. In terms of biological role, FAD-dependent monooxygenase; part of the gene cluster that mediates the biosynthesis of the meroterpenoids nectripenoids A and B, as well as cochliquninone D and isocochliquninone E. The pathway probably begins with the HR-PKS ntnH that catalyzes two chain-extension steps to form a reduced triketide, which then primes the SAT domain in the NR-PKS ntnG to initiate three more cycles of extension to give a linear hexaketide corresponding to the polyketide part of nectripenoids. The FAD-dependent monooxygenase ntnJ then performs an oxidative decarboxylation at C11 of the ntnH/ntnG product, via an electrophilic aromatic hydroxylation with concomitant ipso-decarboxylation. The membrane-bound polyprenyl transferase ntnF then introduces a farnesyl group before the FAD-dependent monooxygenase ntnK functions as the first epoxidase on terminal C12'-C13' olefin, followed by a second epoxidation on C7'-C8' catalyzed by ntnA. The terpene cyclase/mutase ntnI then initiates the sequential tricyclic ring formation through protonation of the terminal epoxide and catalyzes the regioselective and stereoselective 6/6/6-tricyclic ring formation. The cytochrome P450 monooxygenase ntnM may then hydroxylate C1'. The polypeptide is FAD-dependent monooxygenase ntnJ (Nectria sp).